A 684-amino-acid polypeptide reads, in one-letter code: Ubinuclein-1 (684 aa).

Disordered stretches follow at residues 108 to 137 (YKGN…FIDD), 157 to 287 (YVNR…LGKS), 311 to 332 (NVTG…VKSK), 609 to 631 (MVDR…CNPT), and 660 to 684 (PQTR…NLPS). The segment covering 114–137 (SDGEELDGAPDDDEYDTEDSFIDD) has biased composition (acidic residues). Basic and acidic residues-rich tracts occupy residues 157–167 (YVNRGKLERME) and 184–199 (SAKP…DKHT). Residues 211 to 235 (STAPGSWKTQESPLPSGAQDANTSV) are compositionally biased toward polar residues. Residues 238 to 260 (DDVKHSDRANHQSRNDTSHKSRE) show a composition bias toward basic and acidic residues. Composition is skewed to polar residues over residues 261–284 (TGSS…TSLL), 311–321 (NVTGSRQSSQA), 611–631 (DRSN…CNPT), and 669–684 (QNLN…NLPS).

The protein belongs to the ubinuclein family. As to quaternary structure, component of the HIRA complex made of UBN1, UBN2, ASF1A, CABIN1 and HIRA. Interacts with HIRA.

It localises to the nucleus. The protein resides in the nucleolus. May be required for replication-independent chromatin assembly. This is Ubinuclein-1 from Arabidopsis thaliana (Mouse-ear cress).